Reading from the N-terminus, the 326-residue chain is Ribosomal large subunit pseudouridine synthase D (326 aa).

The active site involves aspartate 144.

It belongs to the pseudouridine synthase RluA family.

The protein localises to the cytoplasm. It carries out the reaction uridine(1911/1915/1917) in 23S rRNA = pseudouridine(1911/1915/1917) in 23S rRNA. Responsible for synthesis of pseudouridine from uracil at positions 1911, 1915 and 1917 in 23S ribosomal RNA. The polypeptide is Ribosomal large subunit pseudouridine synthase D (Borreliella burgdorferi (strain ATCC 35210 / DSM 4680 / CIP 102532 / B31) (Borrelia burgdorferi)).